A 212-amino-acid polypeptide reads, in one-letter code: 3,4-dihydroxy-2-butanone 4-phosphate synthase (212 aa).

D-ribulose 5-phosphate contacts are provided by residues 37–38 (RE), aspartate 42, 150–154 (RRGHT), and glutamate 174. Position 38 (glutamate 38) interacts with Mg(2+). Residue histidine 153 coordinates Mg(2+).

It belongs to the DHBP synthase family. Homodimer. Mg(2+) is required as a cofactor. Requires Mn(2+) as cofactor.

It catalyses the reaction D-ribulose 5-phosphate = (2S)-2-hydroxy-3-oxobutyl phosphate + formate + H(+). It functions in the pathway cofactor biosynthesis; riboflavin biosynthesis; 2-hydroxy-3-oxobutyl phosphate from D-ribulose 5-phosphate: step 1/1. In terms of biological role, catalyzes the conversion of D-ribulose 5-phosphate to formate and 3,4-dihydroxy-2-butanone 4-phosphate. The sequence is that of 3,4-dihydroxy-2-butanone 4-phosphate synthase from Histophilus somni (strain 129Pt) (Haemophilus somnus).